Here is a 697-residue protein sequence, read N- to C-terminus: Transmembrane protein 168 (697 aa).

The next 3 helical transmembrane spans lie at 36-56 (LGYL…YVRW), 63-83 (LILV…ILYY), and 89-109 (AASL…LCFL). An N-linked (GlcNAc...) asparagine glycan is attached at N111. 7 consecutive transmembrane segments (helical) span residues 172–192 (MLVE…MLII), 199–219 (FLAI…SLET), 223–243 (PIAF…DIYF), 265–285 (LSVV…AFKL), 293–313 (FVIP…IIFL), 352–372 (FCLI…ILGA), and 380–400 (GIFL…HGLF). N-linked (GlcNAc...) asparagine glycosylation is found at N533 and N598. A helical membrane pass occupies residues 646–666 (ITYPLVHLANWLCGLNLFWIC).

The protein belongs to the TMEM168 family.

It localises to the nucleus membrane. Functionally, plays a key role in maintaining the cardiac electrical stability by modulating cell surface expression of SCN5A. May play a role in the modulation of anxiety behavior by regulating GABAergic neuronal system in the nucleus accumbens. The sequence is that of Transmembrane protein 168 from Homo sapiens (Human).